Consider the following 517-residue polypeptide: GMP synthase [glutamine-hydrolyzing] (517 aa).

The Glutamine amidotransferase type-1 domain maps to 9 to 199 (RILILDFGSQ…VLGVCGCERL (191 aa)). C86 functions as the Nucleophile in the catalytic mechanism. Catalysis depends on residues H173 and E175. The GMPS ATP-PPase domain maps to 200–392 (WTSESIIEDA…LGLPYNMLYR (193 aa)). ATP is bound at residue 227–233 (SGGVDSS).

Homodimer.

It catalyses the reaction XMP + L-glutamine + ATP + H2O = GMP + L-glutamate + AMP + diphosphate + 2 H(+). The protein operates within purine metabolism; GMP biosynthesis; GMP from XMP (L-Gln route): step 1/1. Functionally, catalyzes the synthesis of GMP from XMP. The chain is GMP synthase [glutamine-hydrolyzing] from Vibrio campbellii (strain ATCC BAA-1116).